Consider the following 368-residue polypeptide: Phosphotransferase IIC component GlvC (368 aa).

At 1–11 the chain is on the periplasmic side; the sequence is MLSQIQRFGGA. The 368-residue stretch at 1–368 folds into the PTS EIIC type-1 domain; sequence MLSQIQRFGG…VGNMGGGLID (368 aa). A helical membrane pass occupies residues 12–32; that stretch reads MFTPVLLFPFAGIVVGLAILL. Residues 33–59 lie on the Cytoplasmic side of the membrane; sequence QNPMFVGESLTDPNSLFAQIVHIIEEG. Residues 60–80 form a helical membrane-spanning segment; the sequence is GWTVFRNMPLIFAVGLPIGLA. Residues 81-86 are Periplasmic-facing; the sequence is KQAQGR. A helical membrane pass occupies residues 87 to 107; the sequence is ACLAVMVSFLTWNYFINAMGM. At 108-129 the chain is on the cytoplasmic side; it reads TWGSYFGVDFTQDAVAGSGLTM. A helical transmembrane segment spans residues 130 to 150; sequence MAGIKTLDTSIIGAIIISGIV. The Periplasmic portion of the chain corresponds to 151 to 173; sequence TALHNRLFDKKLPVFLGIFQGTS. The chain crosses the membrane as a helical span at residues 174–194; the sequence is YVVIIAFLVMIPCAWLTLLGW. The Cytoplasmic segment spans residues 195 to 198; the sequence is PKVQ. Residues 199–221 form a helical membrane-spanning segment; the sequence is MGIESLQAFLRSAGALGVWVYTF. Over 222 to 224 the chain is Periplasmic; sequence LER. A helical transmembrane segment spans residues 225-245; sequence ILIPTGLHHFIYGQFIFGPAA. Residues 246–276 lie on the Cytoplasmic side of the membrane; it reads VEGGIQMYWAQHLQEFSLSAEPLKSLFPEGG. The helical transmembrane segment at 277–297 threads the bilayer; sequence FALHGNSKIFGAVGISLAMYF. At 298-306 the chain is on the periplasmic side; the sequence is TAAPENRVK. Residues 307-327 form a helical membrane-spanning segment; the sequence is VAGLLIPATLTAMLVGITEPL. Residue Glu-328 is a topological domain, cytoplasmic. A helical transmembrane segment spans residues 329 to 349; it reads FTFLFISPLLFAVHAVLAASM. Over 350 to 368 the chain is Periplasmic; that stretch reads STVMYLFGVVGNMGGGLID.

It localises to the cell inner membrane. Its function is as follows. The phosphoenolpyruvate-dependent sugar phosphotransferase system (PTS), a major carbohydrate active -transport system, catalyzes the phosphorylation of incoming sugar substrates concomitant with their translocation across the cell membrane. This operon may be cryptic in wild-type K12 strains. This Escherichia coli (strain K12) protein is Phosphotransferase IIC component GlvC.